The sequence spans 283 residues: Cyclin-C (283 aa).

Residues 46 to 144 enclose the Cyclin N-terminal domain; that stretch reads NVIQALGEHL…ILECEFYLLE (99 aa). A disordered region spans residues 252–283; the sequence is TILNKMPKPKPPPNSEGEQGTNGSQSSGYSQS. A compositionally biased stretch (polar residues) spans 267-283; it reads EGEQGTNGSQSSGYSQS.

Belongs to the cyclin family. Cyclin C subfamily. Component of the Mediator complex. The cylin/CDK pair formed by ccnc/cdk8 also associates with the large subunit of RNA polymerase II.

It localises to the nucleus. Component of the Mediator complex, a coactivator involved in regulated gene transcription of nearly all RNA polymerase II-dependent genes. Mediator functions as a bridge to convey information from gene-specific regulatory proteins to the basal RNA polymerase II transcription machinery. Mediator is recruited to promoters by direct interactions with regulatory proteins and serves as a scaffold for the assembly of a functional preinitiation complex with RNA polymerase II and the general transcription factors. Binds to and activates cyclin-dependent kinase cdk8 that phosphorylates the CTD (C-terminal domain) of the large subunit of RNA polymerase II (RNAp II), which may inhibit the formation of a transcription initiation complex. The chain is Cyclin-C (ccnc) from Xenopus tropicalis (Western clawed frog).